The primary structure comprises 61 residues: Potassium channel toxin alpha-KTx 5.3 (61 aa).

A signal peptide spans methionine 1–glycine 28. Disulfide bonds link cysteine 31–cysteine 49, cysteine 36–cysteine 54, and cysteine 40–cysteine 56. The [R/K]XCQ motif stretch occupies residues lysine 34 to glutamine 37. At histidine 59 the chain carries Histidine amide.

It belongs to the short scorpion toxin superfamily. Potassium channel inhibitor family. Alpha-KTx 05 subfamily. As to expression, expressed by the venom gland.

The protein resides in the secreted. In terms of biological role, blocks small conductance calcium-activated potassium channels (KCNN, SK). Has also been shown to weakly inhibit Kv11.1/KCNH2/ERG1, Kv1.2/KCNA2, Kv1.3/KCNA3 and Kv2.1/KCNB1 voltage-gated potassium channels. This is Potassium channel toxin alpha-KTx 5.3 from Olivierus martensii (Manchurian scorpion).